A 270-amino-acid chain; its full sequence is Acyl-[acyl-carrier-protein]--UDP-N-acetylglucosamine O-acyltransferase (270 aa).

Substrate-binding positions include 69 to 72 (QDLK), His121, His140, and Gln157.

This sequence belongs to the transferase hexapeptide repeat family. LpxA subfamily. In terms of assembly, homotrimer.

The protein resides in the cytoplasm. It carries out the reaction a (3R)-hydroxyacyl-[ACP] + UDP-N-acetyl-alpha-D-glucosamine = a UDP-3-O-[(3R)-3-hydroxyacyl]-N-acetyl-alpha-D-glucosamine + holo-[ACP]. It functions in the pathway glycolipid biosynthesis; lipid IV(A) biosynthesis; lipid IV(A) from (3R)-3-hydroxytetradecanoyl-[acyl-carrier-protein] and UDP-N-acetyl-alpha-D-glucosamine: step 1/6. Involved in the biosynthesis of lipid A, a phosphorylated glycolipid that anchors the lipopolysaccharide to the outer membrane of the cell. This is Acyl-[acyl-carrier-protein]--UDP-N-acetylglucosamine O-acyltransferase from Helicobacter pylori (strain ATCC 700392 / 26695) (Campylobacter pylori).